We begin with the raw amino-acid sequence, 358 residues long: Tribbles homolog 3 (358 aa).

The tract at residues 1–54 (MRATPLAAPAGSLSRKKRLELDDNLDTERPVQKRARSGPQPRLPPCLLPLSPPT) is disordered. The segment at 1-127 (MRATPLAAPA…KHVARPTEVL (127 aa)) is interaction with DDIT3/CHOP. At Ser-12 the chain carries Phosphoserine. The segment covering 41 to 54 (PRLPPCLLPLSPPT) has biased composition (pro residues). Residues 68 to 316 (LGPYVLLEPE…TGILLHPWLR (249 aa)) enclose the Protein kinase domain.

It belongs to the protein kinase superfamily. CAMK Ser/Thr protein kinase family. Tribbles subfamily. In terms of assembly, interacts with AKT1, AKT2, MAP2K1 and MAP2K7. Interacts with ATF4. Interacts with DDIT3/CHOP and inhibits its interaction with EP300/P300. Interacts with APOBEC3C. Interacts (via N-terminus) with APOBEC3A. Interacts with RELA. Highest expression in liver, pancreas, peripheral blood leukocytes and bone marrow. Also highly expressed in a number of primary lung, colon and breast tumors. Expressed in spleen, thymus, and prostate and is undetectable in other examined tissues, including testis, ovary, small intestine, colon, leukocyte, heart, brain, placenta, lung, skeletal muscle, and kidney.

It localises to the nucleus. Functionally, inactive protein kinase which acts as a regulator of the integrated stress response (ISR), a process for adaptation to various stress. Inhibits the transcriptional activity of DDIT3/CHOP and is involved in DDIT3/CHOP-dependent cell death during ER stress. May play a role in programmed neuronal cell death but does not appear to affect non-neuronal cells. Acts as a negative feedback regulator of the ATF4-dependent transcription during the ISR: while TRIB3 expression is promoted by ATF4, TRIB3 protein interacts with ATF4 and inhibits ATF4 transcription activity. Disrupts insulin signaling by binding directly to Akt kinases and blocking their activation. May bind directly to and mask the 'Thr-308' phosphorylation site in AKT1. Interacts with the NF-kappa-B transactivator p65 RELA and inhibits its phosphorylation and thus its transcriptional activation activity. Interacts with MAPK kinases and regulates activation of MAP kinases. Can inhibit APOBEC3A editing of nuclear DNA. This is Tribbles homolog 3 (TRIB3) from Homo sapiens (Human).